A 328-amino-acid polypeptide reads, in one-letter code: Beta-ketoacyl-[acyl-carrier-protein] synthase III 2 (328 aa).

Catalysis depends on residues Cys113 and His255. Positions 256 to 260 (QANAR) are ACP-binding. Asn285 is an active-site residue.

Belongs to the thiolase-like superfamily. FabH family. As to quaternary structure, homodimer.

The protein resides in the cytoplasm. The enzyme catalyses malonyl-[ACP] + acetyl-CoA + H(+) = 3-oxobutanoyl-[ACP] + CO2 + CoA. It participates in lipid metabolism; fatty acid biosynthesis. Its function is as follows. Catalyzes the condensation reaction of fatty acid synthesis by the addition to an acyl acceptor of two carbons from malonyl-ACP. Catalyzes the first condensation reaction which initiates fatty acid synthesis and may therefore play a role in governing the total rate of fatty acid production. Possesses both acetoacetyl-ACP synthase and acetyl transacylase activities. Its substrate specificity determines the biosynthesis of branched-chain and/or straight-chain of fatty acids. The protein is Beta-ketoacyl-[acyl-carrier-protein] synthase III 2 of Lactiplantibacillus plantarum (strain ATCC BAA-793 / NCIMB 8826 / WCFS1) (Lactobacillus plantarum).